A 475-amino-acid polypeptide reads, in one-letter code: ADP-ribosyltransferase toxin AexT (475 aa).

A Bacterial Rho-GAP domain is found at 93–226 (VSPEDLQRLM…LQRAVKAEVA (134 aa)). The region spanning 260–436 (EGLQEQFGLE…RVLEEASLGE (177 aa)) is the TR mART core domain. Residues R340, S364, and E403 contribute to the active site.

The protein localises to the secreted. In terms of biological role, directly involved in the toxicity for RTG-2 (rainbow trout gonad) fish cells. This Aeromonas salmonicida protein is ADP-ribosyltransferase toxin AexT (aexT).